A 482-amino-acid chain; its full sequence is Protein nucleotidyltransferase YdiU (482 aa).

Residues G88, G90, R91, K111, D123, G124, R174, and R181 each contribute to the ATP site. D250 (proton acceptor) is an active-site residue. Mg(2+) is bound by residues N251 and D260. D260 serves as a coordination point for ATP.

Belongs to the SELO family. Requires Mg(2+) as cofactor. Mn(2+) serves as cofactor.

It catalyses the reaction L-seryl-[protein] + ATP = 3-O-(5'-adenylyl)-L-seryl-[protein] + diphosphate. It carries out the reaction L-threonyl-[protein] + ATP = 3-O-(5'-adenylyl)-L-threonyl-[protein] + diphosphate. The enzyme catalyses L-tyrosyl-[protein] + ATP = O-(5'-adenylyl)-L-tyrosyl-[protein] + diphosphate. The catalysed reaction is L-histidyl-[protein] + UTP = N(tele)-(5'-uridylyl)-L-histidyl-[protein] + diphosphate. It catalyses the reaction L-seryl-[protein] + UTP = O-(5'-uridylyl)-L-seryl-[protein] + diphosphate. It carries out the reaction L-tyrosyl-[protein] + UTP = O-(5'-uridylyl)-L-tyrosyl-[protein] + diphosphate. Its function is as follows. Nucleotidyltransferase involved in the post-translational modification of proteins. It can catalyze the addition of adenosine monophosphate (AMP) or uridine monophosphate (UMP) to a protein, resulting in modifications known as AMPylation and UMPylation. In Cronobacter sakazakii (strain ATCC BAA-894) (Enterobacter sakazakii), this protein is Protein nucleotidyltransferase YdiU.